A 639-amino-acid chain; its full sequence is Extracellular metalloproteinase 1 (639 aa).

Positions 1–19 are cleaved as a signal peptide; it reads MHGLLLAAGLISLPLHVLA. Residues 20–250 constitute a propeptide that is removed on maturation; sequence HPQPSSTSLA…VHNVVDYVAH (231 aa). An N-linked (GlcNAc...) asparagine glycan is attached at asparagine 291. Zn(2+) is bound at residue histidine 434. The active site involves glutamate 435. Histidine 438 is a binding site for Zn(2+). An N-linked (GlcNAc...) asparagine glycan is attached at asparagine 598.

The protein belongs to the peptidase M36 family. Requires Zn(2+) as cofactor.

The protein localises to the secreted. In terms of biological role, secreted metalloproteinase probably acting as a virulence factor. The sequence is that of Extracellular metalloproteinase 1 (MEP1) from Arthroderma otae (strain ATCC MYA-4605 / CBS 113480) (Microsporum canis).